Consider the following 1213-residue polypeptide: Probable ATP-binding protein BrxC (1213 aa).

Belongs to the BrxC family.

Its function is as follows. BREX systems (bacteriophage exclusion) provide immunity against bacteriophage. Part of a type 1 BREX system which protects against dsDNA phage. This system allows phage adsorption but prevents phage DNA replication, without degradation of the phage DNA. Methylation of bacterial DNA by PglX guides self/non-self discrimination. When the brxA-brxB-brxC-pglX-pglZ-brxL genes are transformed into a susceptible E.coli strain (BW25113) they confer very high resistance to infection by bacteriophage VR7 and VpaE1, about 100-fold protection against lambda, T5 and T7 and no protection against RNA phage Qbeta, ssDNA phage M13 or dSDNA phage T4 and VR5. Glycosylated phage DNA is not susceptible to BREX. The BREX system does not confer resistance to lysogenic lambda phage, i.e. prophage that are integrated into the chromosomal DNA and then induced to form phage. This chain is Probable ATP-binding protein BrxC, found in Escherichia coli O9:H4 (strain HS).